Reading from the N-terminus, the 218-residue chain is Adenylate kinase (218 aa).

ATP is bound at residue 10-15; it reads GAGKGT. The interval 30–59 is NMP; it reads STGDMLRAAIAKGTPLGLSAQKIMESGGLV. Residues T31, R36, 57–59, 85–88, and Q92 contribute to the AMP site; these read GLV and GFPR. The tract at residues 122–159 is LID; sequence GRRIHQPSGRVYHVVNQPPKNPGVDDITGEPLIQRDDD. ATP contacts are provided by residues R123 and 132–133; that span reads VY. Residues R156 and R167 each coordinate AMP. G203 serves as a coordination point for ATP.

It belongs to the adenylate kinase family. In terms of assembly, monomer.

The protein localises to the cytoplasm. The catalysed reaction is AMP + ATP = 2 ADP. Its pathway is purine metabolism; AMP biosynthesis via salvage pathway; AMP from ADP: step 1/1. In terms of biological role, catalyzes the reversible transfer of the terminal phosphate group between ATP and AMP. Plays an important role in cellular energy homeostasis and in adenine nucleotide metabolism. The polypeptide is Adenylate kinase (Legionella pneumophila (strain Lens)).